Consider the following 494-residue polypeptide: Probable cytochrome P450 313a4 (494 aa).

Heme is bound at residue cysteine 440.

Belongs to the cytochrome P450 family. Heme is required as a cofactor.

Its subcellular location is the endoplasmic reticulum membrane. It localises to the microsome membrane. In terms of biological role, may be involved in the metabolism of insect hormones and in the breakdown of synthetic insecticides. This Drosophila melanogaster (Fruit fly) protein is Probable cytochrome P450 313a4 (Cyp313a4).